The chain runs to 92 residues: Putative pterin-4-alpha-carbinolamine dehydratase (92 aa).

It belongs to the pterin-4-alpha-carbinolamine dehydratase family.

It carries out the reaction (4aS,6R)-4a-hydroxy-L-erythro-5,6,7,8-tetrahydrobiopterin = (6R)-L-erythro-6,7-dihydrobiopterin + H2O. The sequence is that of Putative pterin-4-alpha-carbinolamine dehydratase from Picosynechococcus sp. (strain ATCC 27264 / PCC 7002 / PR-6) (Agmenellum quadruplicatum).